The sequence spans 464 residues: Argininosuccinate lyase (464 aa).

This sequence belongs to the lyase 1 family. Argininosuccinate lyase subfamily.

The protein localises to the cytoplasm. The catalysed reaction is 2-(N(omega)-L-arginino)succinate = fumarate + L-arginine. It participates in amino-acid biosynthesis; L-arginine biosynthesis; L-arginine from L-ornithine and carbamoyl phosphate: step 3/3. The polypeptide is Argininosuccinate lyase (Alcanivorax borkumensis (strain ATCC 700651 / DSM 11573 / NCIMB 13689 / SK2)).